We begin with the raw amino-acid sequence, 229 residues long: Large ribosomal subunit protein uL1 (229 aa).

Belongs to the universal ribosomal protein uL1 family. As to quaternary structure, part of the 50S ribosomal subunit.

In terms of biological role, binds directly to 23S rRNA. The L1 stalk is quite mobile in the ribosome, and is involved in E site tRNA release. Its function is as follows. Protein L1 is also a translational repressor protein, it controls the translation of the L11 operon by binding to its mRNA. This is Large ribosomal subunit protein uL1 from Clostridium perfringens (strain ATCC 13124 / DSM 756 / JCM 1290 / NCIMB 6125 / NCTC 8237 / Type A).